A 277-amino-acid chain; its full sequence is Pantothenate synthetase (277 aa).

26-33 (MGNLHEGH) lines the ATP pocket. The active-site Proton donor is His-33. Residue Gln-57 participates in (R)-pantoate binding. Residue Gln-57 participates in beta-alanine binding. 144 to 147 (GKKD) lines the ATP pocket. Gln-150 contacts (R)-pantoate. Residues Val-173 and 181 to 184 (LSSR) each bind ATP.

The protein belongs to the pantothenate synthetase family. In terms of assembly, homodimer.

It is found in the cytoplasm. It carries out the reaction (R)-pantoate + beta-alanine + ATP = (R)-pantothenate + AMP + diphosphate + H(+). Its pathway is cofactor biosynthesis; (R)-pantothenate biosynthesis; (R)-pantothenate from (R)-pantoate and beta-alanine: step 1/1. Catalyzes the condensation of pantoate with beta-alanine in an ATP-dependent reaction via a pantoyl-adenylate intermediate. This is Pantothenate synthetase from Paraburkholderia phymatum (strain DSM 17167 / CIP 108236 / LMG 21445 / STM815) (Burkholderia phymatum).